A 63-amino-acid polypeptide reads, in one-letter code: Large ribosomal subunit protein uL29 (63 aa).

It belongs to the universal ribosomal protein uL29 family.

This chain is Large ribosomal subunit protein uL29, found in Azotobacter vinelandii (strain DJ / ATCC BAA-1303).